A 225-amino-acid chain; its full sequence is 3-dehydroquinate dehydratase (225 aa).

Residues Ser6, 30-32 (EWR), and Arg62 each bind 3-dehydroquinate. His118 acts as the Proton donor/acceptor in catalysis. The Schiff-base intermediate with substrate role is filled by Lys143. 3-dehydroquinate-binding residues include Arg186, Thr205, and Gln209.

The protein belongs to the type-I 3-dehydroquinase family. Homodimer.

The enzyme catalyses 3-dehydroquinate = 3-dehydroshikimate + H2O. It functions in the pathway metabolic intermediate biosynthesis; chorismate biosynthesis; chorismate from D-erythrose 4-phosphate and phosphoenolpyruvate: step 3/7. Functionally, involved in the third step of the chorismate pathway, which leads to the biosynthesis of aromatic amino acids. Catalyzes the cis-dehydration of 3-dehydroquinate (DHQ) and introduces the first double bond of the aromatic ring to yield 3-dehydroshikimate. In Streptococcus gordonii (strain Challis / ATCC 35105 / BCRC 15272 / CH1 / DL1 / V288), this protein is 3-dehydroquinate dehydratase.